The sequence spans 112 residues: ATP synthase subunit c (112 aa).

The next 2 membrane-spanning stretches (helical) occupy residues Phe36–Met56 and Met81–Ile101.

The protein belongs to the ATPase C chain family. In terms of assembly, F-type ATPases have 2 components, F(1) - the catalytic core - and F(0) - the membrane proton channel. F(1) has five subunits: alpha(3), beta(3), gamma(1), delta(1), epsilon(1). F(0) has three main subunits: a(1), b(2) and c(10-14). The alpha and beta chains form an alternating ring which encloses part of the gamma chain. F(1) is attached to F(0) by a central stalk formed by the gamma and epsilon chains, while a peripheral stalk is formed by the delta and b chains.

Its subcellular location is the cell inner membrane. Functionally, f(1)F(0) ATP synthase produces ATP from ADP in the presence of a proton or sodium gradient. F-type ATPases consist of two structural domains, F(1) containing the extramembraneous catalytic core and F(0) containing the membrane proton channel, linked together by a central stalk and a peripheral stalk. During catalysis, ATP synthesis in the catalytic domain of F(1) is coupled via a rotary mechanism of the central stalk subunits to proton translocation. In terms of biological role, key component of the F(0) channel; it plays a direct role in translocation across the membrane. A homomeric c-ring of between 10-14 subunits forms the central stalk rotor element with the F(1) delta and epsilon subunits. The sequence is that of ATP synthase subunit c from Campylobacter jejuni (strain RM1221).